The primary structure comprises 377 residues: tRNA-specific 2-thiouridylase MnmA (377 aa).

ATP-binding positions include 8-15 (GMSGGVDS) and Met-34. Positions 94–96 (NPD) are interaction with target base in tRNA. Cys-99 acts as the Nucleophile in catalysis. Cysteines 99 and 201 form a disulfide. Gly-123 contributes to the ATP binding site. Positions 151 to 153 (KDQ) are interaction with tRNA. The Cysteine persulfide intermediate role is filled by Cys-201. The interaction with tRNA stretch occupies residues 315 to 316 (RY).

It belongs to the MnmA/TRMU family.

It localises to the cytoplasm. The enzyme catalyses S-sulfanyl-L-cysteinyl-[protein] + uridine(34) in tRNA + AH2 + ATP = 2-thiouridine(34) in tRNA + L-cysteinyl-[protein] + A + AMP + diphosphate + H(+). Catalyzes the 2-thiolation of uridine at the wobble position (U34) of tRNA, leading to the formation of s(2)U34. This is tRNA-specific 2-thiouridylase MnmA from Acinetobacter baumannii (strain AB307-0294).